The sequence spans 169 residues: X polypeptide (169 aa).

This sequence belongs to the IagB/IpgF/P19 family.

The protein is X polypeptide (yubQ) of Escherichia coli (strain K12).